Reading from the N-terminus, the 220-residue chain is Octanoyltransferase (220 aa).

The BPL/LPL catalytic domain maps to 27 to 208; sequence PGTADEIWLC…QLARAHGQAV (182 aa). Substrate is bound by residues 66 to 73, 139 to 141, and 152 to 154; these read RGGQVTYH, ALG, and GLA. C170 serves as the catalytic Acyl-thioester intermediate.

This sequence belongs to the LipB family.

It localises to the cytoplasm. It carries out the reaction octanoyl-[ACP] + L-lysyl-[protein] = N(6)-octanoyl-L-lysyl-[protein] + holo-[ACP] + H(+). The protein operates within protein modification; protein lipoylation via endogenous pathway; protein N(6)-(lipoyl)lysine from octanoyl-[acyl-carrier-protein]: step 1/2. Catalyzes the transfer of endogenously produced octanoic acid from octanoyl-acyl-carrier-protein onto the lipoyl domains of lipoate-dependent enzymes. Lipoyl-ACP can also act as a substrate although octanoyl-ACP is likely to be the physiological substrate. The protein is Octanoyltransferase of Bordetella pertussis (strain Tohama I / ATCC BAA-589 / NCTC 13251).